We begin with the raw amino-acid sequence, 90 residues long: Putative beta-neurotoxin RjAa2f (90 aa).

Residues methionine 1–cysteine 18 form the signal peptide. The region spanning lysine 19–glycine 89 is the LCN-type CS-alpha/beta domain. 4 disulfide bridges follow: cysteine 29–cysteine 88, cysteine 33–cysteine 62, cysteine 40–cysteine 69, and cysteine 44–cysteine 71.

It belongs to the long (4 C-C) scorpion toxin superfamily. Sodium channel inhibitor family. Beta subfamily. In terms of tissue distribution, expressed by the venom gland.

It localises to the secreted. Functionally, beta toxins bind voltage-independently at site-4 of sodium channels (Nav) and shift the voltage of activation toward more negative potentials thereby affecting sodium channel activation and promoting spontaneous and repetitive firing. This chain is Putative beta-neurotoxin RjAa2f, found in Rhopalurus junceus (Caribbean blue scorpion).